Reading from the N-terminus, the 89-residue chain is Cell division topological specificity factor (89 aa).

This sequence belongs to the MinE family.

In terms of biological role, prevents the cell division inhibition by proteins MinC and MinD at internal division sites while permitting inhibition at polar sites. This ensures cell division at the proper site by restricting the formation of a division septum at the midpoint of the long axis of the cell. The chain is Cell division topological specificity factor from Klebsiella pneumoniae subsp. pneumoniae (strain ATCC 700721 / MGH 78578).